The chain runs to 397 residues: Xyloglucan O-acetyltransferase 3 (397 aa).

The Cytoplasmic portion of the chain corresponds to 1–3 (MNR). The helical; Signal-anchor for type II membrane protein transmembrane segment at 4 to 24 (FFYTVGLIFLFSFFILYSPKT) threads the bilayer. The Lumenal segment spans residues 25–397 (SDLSNNVDLH…RHAFTDFTWS (373 aa)). Cystine bridges form between Cys48-Cys98, Cys69-Cys134, Cys78-Cys370, and Cys293-Cys366. N-linked (GlcNAc...) asparagine glycosylation is present at Asn66. A GDS motif motif is present at residues 121 to 123 (GDS). Ser123 functions as the Nucleophile in the catalytic mechanism. Residues Asn162, Asn182, and Asn294 are each glycosylated (N-linked (GlcNAc...) asparagine). The active-site Proton donor is the Asp365. Residues 365 to 368 (DCVH) carry the DXXH motif motif. His368 acts as the Proton acceptor in catalysis.

This sequence belongs to the PC-esterase family. TBL subfamily.

It is found in the golgi apparatus membrane. Functionally, xyloglucan acetyltransferase that catalyzes the acetylation of fucosylated Gal residues on xyloglucan side chains. Predominantly catalyze 6-O-monoacetylation of Gal residues in the Fuc-Gal-Xyl trisaccharide side chains of xyloglucan oligomers. The sequence is that of Xyloglucan O-acetyltransferase 3 from Populus trichocarpa (Western balsam poplar).